The chain runs to 185 residues: Ribosome-recycling factor (185 aa).

Belongs to the RRF family.

The protein localises to the cytoplasm. In terms of biological role, responsible for the release of ribosomes from messenger RNA at the termination of protein biosynthesis. May increase the efficiency of translation by recycling ribosomes from one round of translation to another. In Rhodococcus erythropolis (strain PR4 / NBRC 100887), this protein is Ribosome-recycling factor.